A 267-amino-acid chain; its full sequence is MLKVGVVGCGAIASLITKALMSDRLNKAEVLAFYDGNLEKAEKLAMETGADFCRSLDELVSKDLDLIVECASVTAVEDTVIKSLNNGKDVIIMSVGAFADKDLFLKLYKLAEKLERKIYIPSGAVAGIDAVKSGSLGKISDVTLTTTKPVHGLKNALEEQGLNTDEIKEPKTVFEGTVFEAISKFPQNINVSVVLSLASRYPAKVKIIADPCAVVNRHEIFVKGSIGTIKTCVENNPCRDNPKTSALAAYSVIRLIKDLSEPIRIGT.

NAD(+) is bound by residues alanine 124 and asparagine 190. Histidine 218 is a catalytic residue.

The protein belongs to the L-aspartate dehydrogenase family.

It carries out the reaction L-aspartate + NADP(+) + H2O = oxaloacetate + NH4(+) + NADPH + H(+). It catalyses the reaction L-aspartate + NAD(+) + H2O = oxaloacetate + NH4(+) + NADH + H(+). The protein operates within cofactor biosynthesis; NAD(+) biosynthesis; iminoaspartate from L-aspartate (dehydrogenase route): step 1/1. Specifically catalyzes the NAD or NADP-dependent dehydrogenation of L-aspartate to iminoaspartate. The protein is L-aspartate dehydrogenase of Methanococcus maripaludis (strain C5 / ATCC BAA-1333).